An 802-amino-acid polypeptide reads, in one-letter code: Leucine--tRNA ligase (802 aa).

Residues 40–51 carry the 'HIGH' region motif; it reads PYPSGAGLHVGH. The short motif at 576–580 is the 'KMSKS' region element; sequence KMSKS. K579 serves as a coordination point for ATP.

It belongs to the class-I aminoacyl-tRNA synthetase family.

It is found in the cytoplasm. The catalysed reaction is tRNA(Leu) + L-leucine + ATP = L-leucyl-tRNA(Leu) + AMP + diphosphate. The chain is Leucine--tRNA ligase from Bacillus cereus (strain G9842).